Consider the following 219-residue polypeptide: Vesicle-associated membrane protein 721 (219 aa).

Residues 1–196 (MAQQSLIYSF…MWLQNMKIKL (196 aa)) lie on the Cytoplasmic side of the membrane. Residues 10–114 (FVARGTVILV…SLNKEFGSKL (105 aa)) enclose the Longin domain. In terms of domain architecture, v-SNARE coiled-coil homology spans 130–190 (KLAKVKAQVS…TQMRRKMWLQ (61 aa)). Residues 197–217 (IVLAIIIALILIIVLSVCHGF) form a helical; Anchor for type IV membrane protein membrane-spanning segment. The Vesicular portion of the chain corresponds to 218–219 (KC).

Belongs to the synaptobrevin family. As to expression, expressed in flowers, leaves, stems and roots.

It is found in the cell membrane. Its subcellular location is the early endosome membrane. Its function is as follows. Involved in the targeting and/or fusion of transport vesicles to their target membrane. This is Vesicle-associated membrane protein 721 from Arabidopsis thaliana (Mouse-ear cress).